A 676-amino-acid polypeptide reads, in one-letter code: Methionine--tRNA ligase (676 aa).

The short motif at 15-25 (PYANGSIHLGH) is the 'HIGH' region element. The Zn(2+) site is built by cysteine 146, cysteine 149, cysteine 159, and cysteine 162. The 'KMSKS' region signature appears at 332–336 (KMSKS). Lysine 335 contributes to the ATP binding site. In terms of domain architecture, tRNA-binding spans 574-676 (DFAKVDMRIA…SGAQPGQQVK (103 aa)).

It belongs to the class-I aminoacyl-tRNA synthetase family. MetG type 1 subfamily. Homodimer. Zn(2+) serves as cofactor.

Its subcellular location is the cytoplasm. It catalyses the reaction tRNA(Met) + L-methionine + ATP = L-methionyl-tRNA(Met) + AMP + diphosphate. Is required not only for elongation of protein synthesis but also for the initiation of all mRNA translation through initiator tRNA(fMet) aminoacylation. This is Methionine--tRNA ligase from Erwinia tasmaniensis (strain DSM 17950 / CFBP 7177 / CIP 109463 / NCPPB 4357 / Et1/99).